A 204-amino-acid polypeptide reads, in one-letter code: MLEIRNVTCIRDERVLFERLNFTISDGELIQIEGQNGAGKTTLLRIIAGLGYADEGDIFWKNESIKQNREEFHSDLLFLGHHTGVKRELTAFENLAFYQSMHDNYNEAAIWDALARVGLAGREDVAAGQLSAGQQRRVALARLWLSNHKLWILDEPLTAIDKQGVKVLEKLFMDHAKQGGIVLLTTHQDLFIDSNELKKIRLGE.

Residues 2–202 form the ABC transporter domain; sequence LEIRNVTCIR…DSNELKKIRL (201 aa). 34–41 is an ATP binding site; that stretch reads GQNGAGKT.

It belongs to the ABC transporter superfamily. CcmA exporter (TC 3.A.1.107) family. In terms of assembly, the complex is composed of two ATP-binding proteins (CcmA) and two transmembrane proteins (CcmB).

Its subcellular location is the cell inner membrane. It catalyses the reaction heme b(in) + ATP + H2O = heme b(out) + ADP + phosphate + H(+). Part of the ABC transporter complex CcmAB involved in the biogenesis of c-type cytochromes; once thought to export heme, this seems not to be the case, but its exact role is uncertain. Responsible for energy coupling to the transport system. This chain is Cytochrome c biogenesis ATP-binding export protein CcmA, found in Aliivibrio fischeri (strain ATCC 700601 / ES114) (Vibrio fischeri).